A 460-amino-acid polypeptide reads, in one-letter code: Acetyl-coenzyme A carboxylase carboxyl transferase subunit beta, chloroplastic (460 aa).

In terms of domain architecture, CoA carboxyltransferase N-terminal spans 179-460 (LWVQCESCYG…GFFPLTQNGN (282 aa)). Zn(2+) is bound by residues Cys-183, Cys-186, Cys-202, and Cys-205. The segment at 183 to 205 (CESCYGLNYKKFFKSKMNICEHC) adopts a C4-type zinc-finger fold.

This sequence belongs to the AccD/PCCB family. Acetyl-CoA carboxylase is a heterohexamer composed of biotin carboxyl carrier protein, biotin carboxylase and 2 subunits each of ACCase subunit alpha and ACCase plastid-coded subunit beta (accD). Zn(2+) is required as a cofactor.

Its subcellular location is the plastid. It localises to the chloroplast stroma. The catalysed reaction is N(6)-carboxybiotinyl-L-lysyl-[protein] + acetyl-CoA = N(6)-biotinyl-L-lysyl-[protein] + malonyl-CoA. The protein operates within lipid metabolism; malonyl-CoA biosynthesis; malonyl-CoA from acetyl-CoA: step 1/1. In terms of biological role, component of the acetyl coenzyme A carboxylase (ACC) complex. Biotin carboxylase (BC) catalyzes the carboxylation of biotin on its carrier protein (BCCP) and then the CO(2) group is transferred by the transcarboxylase to acetyl-CoA to form malonyl-CoA. The polypeptide is Acetyl-coenzyme A carboxylase carboxyl transferase subunit beta, chloroplastic (Cicer arietinum (Chickpea)).